The sequence spans 346 residues: MASIILINFSETDTLHLGSVNDHIMPRIGYTILSIIMALSSTFGIILNMVVIIVTVRYKQLRQPLNYALVNLAVADLGCPVFGGLLTAVTNAMGYFSLGRVGCVLEGFAVAFFGIAGLCSVAVIAVDRYMVVCRPLGAVMFQTKHALAGVVFSWVWSFIWNTPPLFGWGSYQLEGVMTSCAPNWYRRDPVNVSYILCYFMLCFALPFATIIFSYMHLLHTLWQVAKLQVADSGSTAKVEVQVARMVVIMVMAFLLTWLPYAAFALTVIIDSNIYINPVIGTIPAYLAKSSTVFNPIIYIFMNRQFRDYALPCLLCGKNPWAAKEGRDSDTNTLTTTVSKNTSVSPL.

Topologically, residues 1-29 are extracellular; it reads MASIILINFSETDTLHLGSVNDHIMPRIG. Asn8 is a glycosylation site (N-linked (GlcNAc...) asparagine). Residues 30-54 traverse the membrane as a helical segment; that stretch reads YTILSIIMALSSTFGIILNMVVIIV. The Cytoplasmic segment spans residues 55 to 66; it reads TVRYKQLRQPLN. The helical transmembrane segment at 67–91 threads the bilayer; sequence YALVNLAVADLGCPVFGGLLTAVTN. At 92–106 the chain is on the extracellular side; the sequence is AMGYFSLGRVGCVLE. A disulfide bridge links Cys103 with Cys180. Residues 107–126 traverse the membrane as a helical segment; that stretch reads GFAVAFFGIAGLCSVAVIAV. The Cytoplasmic portion of the chain corresponds to 127-145; it reads DRYMVVCRPLGAVMFQTKH. Residues 146-169 form a helical membrane-spanning segment; sequence ALAGVVFSWVWSFIWNTPPLFGWG. The Extracellular portion of the chain corresponds to 170 to 193; that stretch reads SYQLEGVMTSCAPNWYRRDPVNVS. Residue Asn191 is glycosylated (N-linked (GlcNAc...) asparagine). The helical transmembrane segment at 194-221 threads the bilayer; it reads YILCYFMLCFALPFATIIFSYMHLLHTL. At 222–244 the chain is on the cytoplasmic side; that stretch reads WQVAKLQVADSGSTAKVEVQVAR. A helical membrane pass occupies residues 245 to 268; sequence MVVIMVMAFLLTWLPYAAFALTVI. The Extracellular portion of the chain corresponds to 269–276; it reads IDSNIYIN. A helical transmembrane segment spans residues 277–301; it reads PVIGTIPAYLAKSSTVFNPIIYIFM. Position 288 is an N6-(retinylidene)lysine (Lys288). At 302–346 the chain is on the cytoplasmic side; the sequence is NRQFRDYALPCLLCGKNPWAAKEGRDSDTNTLTTTVSKNTSVSPL. Cys315 carries S-palmitoyl cysteine lipidation. The segment at 325–346 is disordered; sequence GRDSDTNTLTTTVSKNTSVSPL. A compositionally biased stretch (low complexity) spans 330 to 346; sequence TNTLTTTVSKNTSVSPL.

This sequence belongs to the G-protein coupled receptor 1 family. Opsin subfamily. In terms of processing, phosphorylated on some or all of the serine and threonine residues present in the C-terminal region. Parapineal organ.

Its subcellular location is the membrane. The chain is Parapinopsin from Ictalurus punctatus (Channel catfish).